The sequence spans 2038 residues: Non-reducing polyketide synthase ZEA1 (2038 aa).

The tract at residues 9-246 (LLFGDQTDSW…NELNIHALQH (238 aa)) is N-terminal acylcarrier protein transacylase domain (SAT). Positions 364–794 (PGRIAIVGMA…GGNACILLED (431 aa)) constitute a Ketosynthase family 3 (KS3) domain. Catalysis depends on for beta-ketoacyl synthase activity residues Cys537, His672, and His711. The malonyl-CoA:ACP transacylase (MAT) domain stretch occupies residues 888 to 1172 (VFVFTGQGSH…VCSSFVRATL (285 aa)). Ser979 serves as the catalytic For acyl/malonyl transferase activity. A product template (PT) domain region spans residues 1221-1572 (SLLNLPTYAW…HFHEVENAVL (352 aa)). Residues 1254-1405 (HETFKANIST…GQLIQARWDK (152 aa)) are N-terminal hotdog fold. The 320-residue stretch at 1254 to 1573 (HETFKANIST…FHEVENAVLD (320 aa)) folds into the PKS/mFAS DH domain. The segment at 1425–1573 (ISHRLQPQIL…FHEVENAVLD (149 aa)) is C-terminal hotdog fold. The Carrier domain maps to 1616-1693 (QSDAHVLDSI…DLRRVFAPKS (78 aa)). Ser1653 carries the O-(pantetheine 4'-phosphoryl)serine modification. Positions 1700 to 1738 (NDLSRPSLVDDTSQALQSSGSESFDQPPTSVTSTSDSGS) are disordered. A compositionally biased stretch (polar residues) spans 1709–1737 (DDTSQALQSSGSESFDQPPTSVTSTSDSG). Residues 1778–1882 (TGTIATYIHL…PRSKTVEDKN (105 aa)) are thioesterase (TE) domain. Catalysis depends on His2021, which acts as the For thioesterase activity.

The protein operates within mycotoxin biosynthesis. In terms of biological role, non-reducing polyketide synthase; part of the gene cluster that mediates the biosynthesis of zearalenone (ZEA), a nonsteroid estrogen that is a contaminant of cereal grains and causes estrogenic disorders in humans and animals. The ZEA backbone is synthesized from a single acetyl-CoA molecule and eight malonyl-CoA molecules. The reducing polyketide synthase ZEA2 is proposed to synthesize a reduced hexaketide intermediate by using different combinations of its reductive domains during each round of condensation. The hexaketide thioester is then transacylated to the non-reducing polyketide synthase ZEA1 and is further condensed with three malonyl-CoAs without reductive tailoring to yield a mixed reduced/unreduced nonaketide. ZEA1 must be able to interact with ZEA2 to facilitate starter-unit acyltransfer and initiate polyketide biosynthesis. ZEA1 also mediates the required C2-C7 cyclization to form the resorcylate core and catalyzes the formation of the macrolactone. ZEA1 exhibits broad starter-unit specificities toward fatty acyl-CoAs ranging in sizes between C6 and C16 and displays the highest activity toward decanoyl-CoA. ZEB1 is then responsible for the chemical conversion of beta-zearalenonol (beta-ZOL) to ZEA in the biosynthetic pathway. The protein is Non-reducing polyketide synthase ZEA1 of Gibberella zeae (strain ATCC MYA-4620 / CBS 123657 / FGSC 9075 / NRRL 31084 / PH-1) (Wheat head blight fungus).